Consider the following 538-residue polypeptide: Syncytin-2 (538 aa).

The N-terminal stretch at 1-15 (MGLLLLVLILTPSLA) is a signal peptide. Residues 16-478 (AYRHPDFPLL…GWLNWEGTWK (463 aa)) are Extracellular-facing. The short motif at 43–46 (CWLC) is the CXXC element. 3 cysteine pairs are disulfide-bonded: Cys-43–Cys-46, Cys-43–Cys-439, and Cys-431–Cys-438. Residues Asn-133, Asn-146, Asn-177, Asn-220, Asn-241, Asn-247, Asn-312, and Asn-332 are each glycosylated (N-linked (GlcNAc...) asparagine). The tract at residues 354-374 (FIPLLAGLGILAGTGTGIAGI) is fusion peptide. Positions 414–430 (LQNRRGLDMLTAAQGGI) match the CKS-17 motif. The CX6CC signature appears at 431-439 (CLALDEKCC). Asn-443 carries an N-linked (GlcNAc...) asparagine glycan. A helical membrane pass occupies residues 479–499 (WFSWVLPLTGPLVSLLLLLLF). Topologically, residues 500-538 (GPCLLNLITQFVSSRLQAIKLQTNLSAGRHPRNIQESPF) are cytoplasmic.

Belongs to the gamma type-C retroviral envelope protein family. HERV class-I FRD env subfamily. The surface and transmembrane proteins form a heterodimer. They are attached by non-covalent interactions or by a labile interchain disulfide bond. Interacts with MFSD2A. Post-translationally, specific enzymatic cleavages in vivo yield the mature SU and TM proteins. The CXXC motif is highly conserved across a broad range of retroviral envelope proteins. It is thought to participate in the formation of a labile disulfide bond possibly with the CX6CC motif present in the transmembrane protein. Isomerization of the intersubunit disulfide bond to an SU intrachain disulfide bond is thought to occur upon receptor recognition in order to allow membrane fusion. In terms of tissue distribution, expressed at higher level in placenta. Expressed at lower level in adrenal, bone marrow, brain, breast, colon, kidney, lung, ovary, peripheral blood lymphocytes, prostate, skin, spleen, testis, thymus, thyroid, trachea.

The protein localises to the virion. It localises to the cell membrane. In terms of biological role, this endogenous retroviral envelope protein has retained its original fusogenic properties and participates in trophoblast fusion and the formation of a syncytium during placenta morphogenesis. The interaction with MFSD2A is apparently important for this process. Functionally, endogenous envelope proteins may have kept, lost or modified their original function during evolution but this one can still make pseudotypes with MLV, HIV-1 or SIV-1 virions and confer infectivity. Retroviral envelope proteins mediate receptor recognition and membrane fusion during early infection. The surface protein mediates receptor recognition, while the transmembrane protein anchors the envelope heterodimer to the viral membrane through one transmembrane domain. The other hydrophobic domain, called fusion peptide, mediates fusion of the viral membrane with the target cell membrane. The sequence is that of Syncytin-2 (ERVFRD-1) from Homo sapiens (Human).